The sequence spans 595 residues: DNA-binding protein REB1 (595 aa).

Basic and acidic residues-rich tracts occupy residues 25-46 (KSGE…KEQD) and 54-71 (DPGR…RDAN). Residues 25–208 (KSGEDDAVNK…IDDHVDDVSV (184 aa)) are disordered. Positions 75–84 (AVAAAAVAAA) are enriched in low complexity. A compositionally biased stretch (basic residues) spans 114 to 123 (KKSKKNKNKL). The segment covering 163 to 176 (NIASQHPDFQQYLN) has biased composition (polar residues). The segment covering 182–205 (EPKKEKSEERSYGDLSNIDDHVDD) has biased composition (basic and acidic residues). The HTH myb-type domain occupies 333–384 (HIFEQRGKWTPEEDAELARWCAEKEGQWSNIGKVLGRMPEDCRDRWRNYVKC). Positions 360-382 (WSNIGKVLGRMPEDCRDRWRNYV) form a DNA-binding region, H-T-H motif. A Myb-like domain is found at 385–490 (GPNRAANKWS…QCRYKWNKLL (106 aa)). The interval 414–456 (TAYEDGEDDEMKDSSTKIEDSGDADMLDVQDSDKKPSISNSKK) is disordered. Positions 434 to 443 (SGDADMLDVQ) are enriched in acidic residues.

It localises to the nucleus. Its function is as follows. DNA-binding protein that recognizes sites within both the enhancer and the promoter of rRNA transcription, as well as upstream of many genes transcribed by RNA polymerase II. It is essential for cell growth. May stimulate or inhibit transcription. Specifically recognizes the sequence 5'-CCGGGTA-3' or 5'-CGGGTRR-3' (where R is any purine). This Kluyveromyces lactis (strain ATCC 8585 / CBS 2359 / DSM 70799 / NBRC 1267 / NRRL Y-1140 / WM37) (Yeast) protein is DNA-binding protein REB1 (REB1).